The sequence spans 104 residues: Seminal ribonuclease (104 aa).

4 disulfides stabilise this stretch: Cys-12–Cys-70, Cys-26–Cys-81, Cys-44–Cys-96, and Cys-51–Cys-58. Substrate is bound by residues 27–31, Lys-52, and Arg-71; that span reads KPVNT.

Belongs to the pancreatic ribonuclease family. Homodimer; disulfide-linked.

The protein resides in the secreted. The enzyme catalyses an [RNA] containing cytidine + H2O = an [RNA]-3'-cytidine-3'-phosphate + a 5'-hydroxy-ribonucleotide-3'-[RNA].. It catalyses the reaction an [RNA] containing uridine + H2O = an [RNA]-3'-uridine-3'-phosphate + a 5'-hydroxy-ribonucleotide-3'-[RNA].. The polypeptide is Seminal ribonuclease (SRN) (Saiga tatarica (Saiga antelope)).